The following is a 478-amino-acid chain: Puromycin-sensitive aminopeptidase-like protein (478 aa).

Substrate is bound by residues Glu-180 and 316–320; that span reads GAMEN. His-352 lines the Zn(2+) pocket. The active-site Proton acceptor is the Glu-353. Positions 356 and 375 each coordinate Zn(2+).

This sequence belongs to the peptidase M1 family. Requires Zn(2+) as cofactor.

Aminopeptidase with broad substrate specificity to several peptides. The sequence is that of Puromycin-sensitive aminopeptidase-like protein (NPEPPSL1) from Homo sapiens (Human).